The following is a 26-amino-acid chain: Orexigenic neuropeptide 26RFa (26 aa).

Phenylalanine 26 is subject to Phenylalanine amide.

As to expression, brain.

Its subcellular location is the secreted. May have orexigenic activity. May promote aldosterone secretion by the adrenal gland. This chain is Orexigenic neuropeptide 26RFa, found in Pelophylax lessonae (Pool frog).